The primary structure comprises 276 residues: Dermonecrotic toxin LarSicTox-alphaIB2c (276 aa).

H5 is a catalytic residue. The Mg(2+) site is built by E25 and D27. H41 (nucleophile) is an active-site residue. 2 cysteine pairs are disulfide-bonded: C45-C51 and C47-C190. Residue D85 coordinates Mg(2+). The N-linked (GlcNAc...) asparagine glycan is linked to N253.

The protein belongs to the arthropod phospholipase D family. Class II subfamily. The cofactor is Mg(2+). As to expression, expressed by the venom gland.

Its subcellular location is the secreted. It carries out the reaction an N-(acyl)-sphingosylphosphocholine = an N-(acyl)-sphingosyl-1,3-cyclic phosphate + choline. The enzyme catalyses an N-(acyl)-sphingosylphosphoethanolamine = an N-(acyl)-sphingosyl-1,3-cyclic phosphate + ethanolamine. The catalysed reaction is a 1-acyl-sn-glycero-3-phosphocholine = a 1-acyl-sn-glycero-2,3-cyclic phosphate + choline. It catalyses the reaction a 1-acyl-sn-glycero-3-phosphoethanolamine = a 1-acyl-sn-glycero-2,3-cyclic phosphate + ethanolamine. Its function is as follows. Dermonecrotic toxins cleave the phosphodiester linkage between the phosphate and headgroup of certain phospholipids (sphingolipid and lysolipid substrates), forming an alcohol (often choline) and a cyclic phosphate. This toxin acts on sphingomyelin (SM). It may also act on ceramide phosphoethanolamine (CPE), lysophosphatidylcholine (LPC) and lysophosphatidylethanolamine (LPE), but not on lysophosphatidylserine (LPS), and lysophosphatidylglycerol (LPG). It acts by transphosphatidylation, releasing exclusively cyclic phosphate products as second products. Induces dermonecrosis, hemolysis, increased vascular permeability, edema, inflammatory response, and platelet aggregation. The chain is Dermonecrotic toxin LarSicTox-alphaIB2c from Loxosceles arizonica (Arizona brown spider).